The following is a 199-amino-acid chain: Recombination protein RecR (199 aa).

Residues 58-73 form a C4-type zinc finger; sequence CSACGNVDTQDPCAIC. The 96-residue stretch at 81-176 folds into the Toprim domain; the sequence is HILCIVEEVG…SVSRLAHGVP (96 aa).

It belongs to the RecR family.

May play a role in DNA repair. It seems to be involved in an RecBC-independent recombinational process of DNA repair. It may act with RecF and RecO. This chain is Recombination protein RecR, found in Parvibaculum lavamentivorans (strain DS-1 / DSM 13023 / NCIMB 13966).